Consider the following 235-residue polypeptide: Phosphoribosylaminoimidazole-succinocarboxamide synthase (235 aa).

It belongs to the SAICAR synthetase family.

It catalyses the reaction 5-amino-1-(5-phospho-D-ribosyl)imidazole-4-carboxylate + L-aspartate + ATP = (2S)-2-[5-amino-1-(5-phospho-beta-D-ribosyl)imidazole-4-carboxamido]succinate + ADP + phosphate + 2 H(+). The protein operates within purine metabolism; IMP biosynthesis via de novo pathway; 5-amino-1-(5-phospho-D-ribosyl)imidazole-4-carboxamide from 5-amino-1-(5-phospho-D-ribosyl)imidazole-4-carboxylate: step 1/2. The protein is Phosphoribosylaminoimidazole-succinocarboxamide synthase of Clostridium botulinum (strain Eklund 17B / Type B).